A 333-amino-acid chain; its full sequence is Homoserine O-succinyltransferase (333 aa).

The active-site Acyl-thioester intermediate is the Cys-147. The substrate site is built by Lys-168 and Ser-196. The active-site Proton acceptor is His-239. Glu-241 is an active-site residue. Arg-253 serves as a coordination point for substrate.

This sequence belongs to the MetA family.

The protein localises to the cytoplasm. It carries out the reaction L-homoserine + succinyl-CoA = O-succinyl-L-homoserine + CoA. It participates in amino-acid biosynthesis; L-methionine biosynthesis via de novo pathway; O-succinyl-L-homoserine from L-homoserine: step 1/1. In terms of biological role, transfers a succinyl group from succinyl-CoA to L-homoserine, forming succinyl-L-homoserine. The chain is Homoserine O-succinyltransferase from Rhodopseudomonas palustris.